The sequence spans 298 residues: Vacuolar protein sorting-associated protein 26 (298 aa).

It belongs to the VPS26 family. As to quaternary structure, component of the retromer complex which consists of vps29, vps6, vps35, vps5 and vps17. Component of a retromer subcomplex consisting of vps29, vps26 and vps35.

Plays a role in vesicular protein sorting. Required for the endosome-to-Golgi retrieval of the vacuolar protein sorting receptor pep1/vps10. Component of the membrane-associated retromer complex which is essential in endosome-to-Golgi retrograde transport. The vps29-vps26-vps35 subcomplex may be involved in cargo selection. The protein is Vacuolar protein sorting-associated protein 26 (vps26) of Schizosaccharomyces pombe (strain 972 / ATCC 24843) (Fission yeast).